The following is a 360-amino-acid chain: GTP 3',8-cyclase (360 aa).

The interval 1–31 (MTVTALGVPTVRGRSEGSAVASDAPGDGPLL) is disordered. The 219-residue stretch at 33 to 251 (RFGRSATDLR…LQPHFRLRPD (219 aa)) folds into the Radical SAM core domain. Arg-42 is a binding site for GTP. [4Fe-4S] cluster contacts are provided by Cys-49 and Cys-53. Tyr-55 lines the S-adenosyl-L-methionine pocket. Cys-56 provides a ligand contact to [4Fe-4S] cluster. Arg-93 is a GTP binding site. Gly-97 contacts S-adenosyl-L-methionine. Thr-124 is a binding site for GTP. Ser-148 lines the S-adenosyl-L-methionine pocket. Lys-185 provides a ligand contact to GTP. Met-219 is an S-adenosyl-L-methionine binding site. [4Fe-4S] cluster contacts are provided by Cys-287 and Cys-290. 292-294 (RTR) serves as a coordination point for GTP. Cys-304 provides a ligand contact to [4Fe-4S] cluster.

This sequence belongs to the radical SAM superfamily. MoaA family. As to quaternary structure, monomer and homodimer. The cofactor is [4Fe-4S] cluster.

It catalyses the reaction GTP + AH2 + S-adenosyl-L-methionine = (8S)-3',8-cyclo-7,8-dihydroguanosine 5'-triphosphate + 5'-deoxyadenosine + L-methionine + A + H(+). It participates in cofactor biosynthesis; molybdopterin biosynthesis. Its function is as follows. Catalyzes the cyclization of GTP to (8S)-3',8-cyclo-7,8-dihydroguanosine 5'-triphosphate. The sequence is that of GTP 3',8-cyclase from Mycobacterium ulcerans (strain Agy99).